The following is a 379-amino-acid chain: 1-deoxy-D-xylulose 5-phosphate reductoisomerase (379 aa).

NADPH contacts are provided by threonine 10, glycine 11, serine 12, isoleucine 13, arginine 38, asparagine 39, and asparagine 121. Position 122 (lysine 122) interacts with 1-deoxy-D-xylulose 5-phosphate. Glutamate 123 provides a ligand contact to NADPH. Aspartate 147 contributes to the Mn(2+) binding site. Serine 148, glutamate 149, serine 173, and histidine 196 together coordinate 1-deoxy-D-xylulose 5-phosphate. Position 149 (glutamate 149) interacts with Mn(2+). Position 202 (glycine 202) interacts with NADPH. 1-deoxy-D-xylulose 5-phosphate contacts are provided by serine 209, asparagine 214, lysine 215, and glutamate 218. Glutamate 218 contacts Mn(2+).

Belongs to the DXR family. The cofactor is Mg(2+). Mn(2+) serves as cofactor.

It catalyses the reaction 2-C-methyl-D-erythritol 4-phosphate + NADP(+) = 1-deoxy-D-xylulose 5-phosphate + NADPH + H(+). It functions in the pathway isoprenoid biosynthesis; isopentenyl diphosphate biosynthesis via DXP pathway; isopentenyl diphosphate from 1-deoxy-D-xylulose 5-phosphate: step 1/6. In terms of biological role, catalyzes the NADPH-dependent rearrangement and reduction of 1-deoxy-D-xylulose-5-phosphate (DXP) to 2-C-methyl-D-erythritol 4-phosphate (MEP). This chain is 1-deoxy-D-xylulose 5-phosphate reductoisomerase, found in Chlamydia muridarum (strain MoPn / Nigg).